The primary structure comprises 139 residues: Peptide methionine sulfoxide reductase B4 (139 aa).

Ala-2 is subject to N-acetylalanine. In terms of domain architecture, MsrB spans 12 to 133; the sequence is EEEWRAVLSP…NSVSINFNPA (122 aa). Cys-51, Cys-54, Cys-97, and Cys-100 together coordinate Zn(2+). Cys-69 and Cys-122 are disulfide-bonded. Residue Cys-122 is the Nucleophile of the active site.

Belongs to the MsrB Met sulfoxide reductase family. The cofactor is Zn(2+).

It localises to the cytoplasm. The protein resides in the cytosol. The catalysed reaction is L-methionyl-[protein] + [thioredoxin]-disulfide + H2O = L-methionyl-(R)-S-oxide-[protein] + [thioredoxin]-dithiol. Catalyzes the reduction of methionine sulfoxide (MetSO) to methionine in proteins. Plays a protective role against oxidative stress by restoring activity to proteins that have been inactivated by methionine oxidation. MSRB family specifically reduces the MetSO R-enantiomer. This Arabidopsis thaliana (Mouse-ear cress) protein is Peptide methionine sulfoxide reductase B4 (MSRB4).